The chain runs to 356 residues: MKKKVLVGMSGGVDSSVAAYLLKEQGYEVIGVTMQIWQDDEEFIEKEGGCCSLSAVADARRVANKIGIPFYVMNFKDAFKRNVIDYFVDEYMEGRTPNPCIACNKFIKFSSFLDKAMAMGIDYVATGHYAIIEKHNDRYIIKKSEDDRKDQTYALYNLTQFQLERTLMPCGQYKKSKIREIAKEIGLRVHNKKDSEEICFIPDNDHGRYIKNRFPNKVREGNFVDKQGNILGTHKGIVYYTIGQRKGLGIAFGKPMYVVDINPFRNEVVLGDLEDLLNTELIAKDINYIPFDTLKDPMEVEAKIRYSQTPSKAIITPIEDGRVRVNFHEKQRAITKGQSVVFYKDDLLIGGGIIEK.

Residues 8 to 15 (GMSGGVDS) and M34 each bind ATP. C103 acts as the Nucleophile in catalysis. An intrachain disulfide couples C103 to C199. Position 127 (G127) interacts with ATP. The interval 149 to 151 (KDQ) is interaction with tRNA. The Cysteine persulfide intermediate role is filled by C199. An interaction with tRNA region spans residues 305–306 (RY).

The protein belongs to the MnmA/TRMU family.

The protein resides in the cytoplasm. The enzyme catalyses S-sulfanyl-L-cysteinyl-[protein] + uridine(34) in tRNA + AH2 + ATP = 2-thiouridine(34) in tRNA + L-cysteinyl-[protein] + A + AMP + diphosphate + H(+). In terms of biological role, catalyzes the 2-thiolation of uridine at the wobble position (U34) of tRNA, leading to the formation of s(2)U34. The chain is tRNA-specific 2-thiouridylase MnmA 2 from Clostridium botulinum (strain Okra / Type B1).